The sequence spans 294 residues: ATP phosphoribosyltransferase (294 aa).

This sequence belongs to the ATP phosphoribosyltransferase family. Long subfamily. Requires Mg(2+) as cofactor.

The protein resides in the cytoplasm. The enzyme catalyses 1-(5-phospho-beta-D-ribosyl)-ATP + diphosphate = 5-phospho-alpha-D-ribose 1-diphosphate + ATP. The protein operates within amino-acid biosynthesis; L-histidine biosynthesis; L-histidine from 5-phospho-alpha-D-ribose 1-diphosphate: step 1/9. Feedback inhibited by histidine. Functionally, catalyzes the condensation of ATP and 5-phosphoribose 1-diphosphate to form N'-(5'-phosphoribosyl)-ATP (PR-ATP). Has a crucial role in the pathway because the rate of histidine biosynthesis seems to be controlled primarily by regulation of HisG enzymatic activity. This chain is ATP phosphoribosyltransferase, found in Pelodictyon phaeoclathratiforme (strain DSM 5477 / BU-1).